A 476-amino-acid chain; its full sequence is Ribosomal protein uS12 methylthiotransferase RimO (476 aa).

In terms of domain architecture, MTTase N-terminal spans 33 to 143 (NRIGFVSLGC…VLKHVHKYVP (111 aa)). Residues Cys-42, Cys-78, Cys-107, Cys-175, Cys-179, and Cys-182 each coordinate [4Fe-4S] cluster. The Radical SAM core domain maps to 161-398 (LTPKHYAYLK…MEVQAEISAE (238 aa)). Residues 401–467 (ARFVGRTMDI…EHDLWAELVD (67 aa)) form the TRAM domain.

This sequence belongs to the methylthiotransferase family. RimO subfamily. Requires [4Fe-4S] cluster as cofactor.

Its subcellular location is the cytoplasm. The enzyme catalyses L-aspartate(89)-[ribosomal protein uS12]-hydrogen + (sulfur carrier)-SH + AH2 + 2 S-adenosyl-L-methionine = 3-methylsulfanyl-L-aspartate(89)-[ribosomal protein uS12]-hydrogen + (sulfur carrier)-H + 5'-deoxyadenosine + L-methionine + A + S-adenosyl-L-homocysteine + 2 H(+). Catalyzes the methylthiolation of an aspartic acid residue of ribosomal protein uS12. In Shewanella sp. (strain MR-4), this protein is Ribosomal protein uS12 methylthiotransferase RimO.